An 876-amino-acid chain; its full sequence is DNA mismatch repair protein MutS (876 aa).

An ATP-binding site is contributed by 626–633 (GPNMGGKS).

Belongs to the DNA mismatch repair MutS family.

This protein is involved in the repair of mismatches in DNA. It is possible that it carries out the mismatch recognition step. This protein has a weak ATPase activity. The sequence is that of DNA mismatch repair protein MutS from Bordetella bronchiseptica (strain ATCC BAA-588 / NCTC 13252 / RB50) (Alcaligenes bronchisepticus).